The sequence spans 87 residues: DNA/RNA-binding protein Alba (87 aa).

Lysine 9 carries the N6-acetyllysine modification.

This sequence belongs to the histone-like Alba family. In terms of processing, acetylated. Acetylation at Lys-9 decreases DNA-binding affinity.

It is found in the cytoplasm. It localises to the chromosome. Binds double-stranded DNA tightly but without sequence specificity. Involved in DNA compaction. The polypeptide is DNA/RNA-binding protein Alba (Methanocaldococcus jannaschii (strain ATCC 43067 / DSM 2661 / JAL-1 / JCM 10045 / NBRC 100440) (Methanococcus jannaschii)).